The chain runs to 234 residues: 3,4-dihydroxy-2-butanone 4-phosphate synthase (234 aa).

Residues 39-40, D44, 152-156, and E176 each bind D-ribulose 5-phosphate; these read RE and RRGHT. E40 lines the Mg(2+) pocket. H155 lines the Mg(2+) pocket.

The protein belongs to the DHBP synthase family. Homodimer. Requires Mg(2+) as cofactor. Mn(2+) is required as a cofactor.

The catalysed reaction is D-ribulose 5-phosphate = (2S)-2-hydroxy-3-oxobutyl phosphate + formate + H(+). The protein operates within cofactor biosynthesis; riboflavin biosynthesis; 2-hydroxy-3-oxobutyl phosphate from D-ribulose 5-phosphate: step 1/1. Catalyzes the conversion of D-ribulose 5-phosphate to formate and 3,4-dihydroxy-2-butanone 4-phosphate. The polypeptide is 3,4-dihydroxy-2-butanone 4-phosphate synthase (Pelobacter propionicus (strain DSM 2379 / NBRC 103807 / OttBd1)).